The following is a 259-amino-acid chain: Src-like-adapter 2 (259 aa).

Residues 1–20 (MGSLSSRGKTSSPSPSSSGP) are compositionally biased toward low complexity. A disordered region spans residues 1–30 (MGSLSSRGKTSSPSPSSSGPDQEPVSMQPE). A lipid anchor (N-myristoyl glycine) is attached at glycine 2. Residues 31-91 (RHKVTAVALG…PSVYVAKVAH (61 aa)) enclose the SH3 domain. The region spanning 93–190 (WLYEGLSREK…GICCPLREPC (98 aa)) is the SH2 domain. An SLA C-terminal region spans residues 190 to 259 (CVLQKLGPLP…SLAEDPLDDA (70 aa)).

Interacts (via its C-terminal domain) with CBL (phosphorylated). Interacts (via SH2 domain) with ZAP70 (phosphorylated) and CD3Z (phosphorylated). Interacts (via SH2 domain) with CSF1R (phosphorylated). In terms of processing, phosphorylated by CSF1R. Mainly expressed in immune system. Highly expressed in spleen and thymus and expressed at intermediate levels in lung. Not expressed in liver, heart and brain. Isoform 1 is predominant in lung and spleen, while isoform 2 is predominant in thymus.

The protein localises to the cytoplasm. It is found in the cell membrane. The protein resides in the cytoplasmic vesicle. It localises to the late endosome. In terms of biological role, adapter protein, which negatively regulates T-cell receptor (TCR) signaling. Inhibits T-cell antigen-receptor induced activation of nuclear factor of activated T-cells. May act by linking signaling proteins such as ZAP70 with CBL, leading to a CBL dependent degradation of signaling proteins. This Mus musculus (Mouse) protein is Src-like-adapter 2 (Sla2).